A 679-amino-acid polypeptide reads, in one-letter code: HEAT repeat-containing protein 3 (679 aa).

The segment covering 1-11 (MGKSRTKRFKR) has biased composition (basic residues). Residues 1-40 (MGKSRTKRFKRPQFSPIESCQAEAAAASNGTGDEEDDGPA) are disordered. Serine 15 bears the Phosphoserine mark. HEAT repeat units follow at residues 38 to 69 (GPAA…VQQR) and 74 to 110 (DLAR…SACG). Position 144 is a phosphoserine (serine 144). Position 339 is a phosphothreonine (threonine 339).

Belongs to the nuclear import and ribosome assembly adapter family. In terms of assembly, component of a hexameric 5S RNP precursor complex, composed of 5S RNA, RRS1, RPF2/BXDC1, RPL5, RPL11 and HEATR3; this complex acts as a precursor for ribosome assembly.

Plays a role in ribosome biogenesis and in nuclear import of the 60S ribosomal protein L5/large ribosomal subunit protein uL18 (RPL5). Required for proper erythrocyte maturation. The protein is HEAT repeat-containing protein 3 (Heatr3) of Mus musculus (Mouse).